We begin with the raw amino-acid sequence, 40 residues long: Ostricacin-3 (40 aa).

3 cysteine pairs are disulfide-bonded: Cys8–Cys36, Cys15–Cys30, and Cys20–Cys37.

Its subcellular location is the secreted. Its function is as follows. Has antibacterial activity against the Gram-positive bacterium S.aureus 1056 MRSA (MIC=2.78 ug/ml) and the Gram-negative bacterium E.coli O157:H7 (MIC=2.41 ug/ml). Does not have antifungal activity against the yeast C.albicans 3153A. The sequence is that of Ostricacin-3 from Struthio camelus (Common ostrich).